We begin with the raw amino-acid sequence, 277 residues long: Tryptophan synthase alpha chain (277 aa).

Catalysis depends on proton acceptor residues E42 and E53.

This sequence belongs to the TrpA family. In terms of assembly, tetramer of two alpha and two beta chains.

The enzyme catalyses (1S,2R)-1-C-(indol-3-yl)glycerol 3-phosphate + L-serine = D-glyceraldehyde 3-phosphate + L-tryptophan + H2O. The protein operates within amino-acid biosynthesis; L-tryptophan biosynthesis; L-tryptophan from chorismate: step 5/5. In terms of biological role, the alpha subunit is responsible for the aldol cleavage of indoleglycerol phosphate to indole and glyceraldehyde 3-phosphate. The protein is Tryptophan synthase alpha chain of Natronomonas pharaonis (strain ATCC 35678 / DSM 2160 / CIP 103997 / JCM 8858 / NBRC 14720 / NCIMB 2260 / Gabara) (Halobacterium pharaonis).